The following is a 660-amino-acid chain: UPF0603 protein MT2410 (660 aa).

An N-terminal signal peptide occupies residues 1-26 (MRLVRLLGMVLTILAAGLLLGPPAGA). Residues 162–182 (VVLLVTVGIIVIVVAVLLVVM) traverse the membrane as a helical segment. Residues 488–567 (DQLTKVDADL…LEAAHDRKSS (80 aa)) adopt a coiled-coil conformation. The chain crosses the membrane as a helical span at residues 605 to 625 (GGNNAGAILGGIIIGDLLSGG). Residues 638 to 660 (FGGSSNAPGSSPDGGFLGGGGRF) are disordered.

The protein belongs to the UPF0603 family.

It localises to the cell membrane. May play a role in septum formation. The protein is UPF0603 protein MT2410 of Mycobacterium tuberculosis (strain CDC 1551 / Oshkosh).